We begin with the raw amino-acid sequence, 349 residues long: Magnesium-protoporphyrin IX monomethyl ester [oxidative] cyclase (349 aa).

The protein belongs to the AcsF family. It depends on Fe cation as a cofactor.

It is found in the plastid. It localises to the chloroplast. The catalysed reaction is Mg-protoporphyrin IX 13-monomethyl ester + 3 NADPH + 3 O2 + 2 H(+) = 3,8-divinyl protochlorophyllide a + 3 NADP(+) + 5 H2O. It participates in porphyrin-containing compound metabolism; chlorophyll biosynthesis (light-independent). Its function is as follows. Catalyzes the formation of the isocyclic ring in chlorophyll biosynthesis. Mediates the cyclase reaction, which results in the formation of divinylprotochlorophyllide (Pchlide) characteristic of all chlorophylls from magnesium-protoporphyrin IX 13-monomethyl ester (MgPMME). This chain is Magnesium-protoporphyrin IX monomethyl ester [oxidative] cyclase, found in Pyropia yezoensis (Susabi-nori).